Here is a 92-residue protein sequence, read N- to C-terminus: UPF0235 protein PYRAB05010 (92 aa).

The protein belongs to the UPF0235 family.

This chain is UPF0235 protein PYRAB05010, found in Pyrococcus abyssi (strain GE5 / Orsay).